A 799-amino-acid polypeptide reads, in one-letter code: Disintegrin and metalloproteinase domain-containing protein B (799 aa).

Residues Met1–Ala23 form the signal peptide. At Arg24–Pro707 the chain is on the extracellular side. N-linked (GlcNAc...) asparagine glycosylation is found at Asn33, Asn227, Asn228, Asn314, and Asn408. A Peptidase M12B domain is found at Lys272 to Thr511. Cystine bridges form between Cys396-Cys496, Cys449-Cys460, and Cys581-Cys601. His432 is a binding site for Zn(2+). The active site involves Glu433. Zn(2+) is bound by residues His436 and His442. The Disintegrin domain occupies Gly520–Asp609. The helical transmembrane segment at Ile708–Ile728 threads the bilayer. Topologically, residues Cys729–Ala799 are cytoplasmic. Residues Val753–Ala799 form a disordered region. The span at Asn776 to Tyr789 shows a compositional bias: pro residues.

It depends on Zn(2+) as a cofactor.

The protein localises to the membrane. In terms of biological role, probable zinc protease. The chain is Disintegrin and metalloproteinase domain-containing protein B (ADM-B) from Arthroderma benhamiae (strain ATCC MYA-4681 / CBS 112371) (Trichophyton mentagrophytes).